Consider the following 464-residue polypeptide: Cerebellar degeneration-related protein 2-like (464 aa).

Coiled coils occupy residues 31–154 (AAEL…RRKT), 201–264 (VSSL…KSRV), and 342–379 (MSIL…AEVQ). Residues 371 to 419 (ESLRHAEVQTSRPVSRDPSMKECRVAEPQQPPPTPPQTPSTPEALEGIS) form a disordered region. Residues 384 to 395 (VSRDPSMKECRV) are compositionally biased toward basic and acidic residues. Pro residues predominate over residues 399–409 (QQPPPTPPQTP).

It belongs to the CDR2 family.

The polypeptide is Cerebellar degeneration-related protein 2-like (cdr2l) (Danio rerio (Zebrafish)).